Consider the following 217-residue polypeptide: Uracil-DNA glycosylase (217 aa).

The active-site Proton acceptor is the Asp62.

This sequence belongs to the uracil-DNA glycosylase (UDG) superfamily. UNG family.

The protein resides in the cytoplasm. The enzyme catalyses Hydrolyzes single-stranded DNA or mismatched double-stranded DNA and polynucleotides, releasing free uracil.. Excises uracil residues from the DNA which can arise as a result of misincorporation of dUMP residues by DNA polymerase or due to deamination of cytosine. The chain is Uracil-DNA glycosylase from Streptococcus uberis (strain ATCC BAA-854 / 0140J).